Reading from the N-terminus, the 284-residue chain is NAD kinase (284 aa).

The active-site Proton acceptor is D70. Residues D70–G71, N139–E140, K167, D169, L177, T180–S185, and Q236 contribute to the NAD(+) site.

The protein belongs to the NAD kinase family. The cofactor is a divalent metal cation.

The protein localises to the cytoplasm. It carries out the reaction NAD(+) + ATP = ADP + NADP(+) + H(+). Functionally, involved in the regulation of the intracellular balance of NAD and NADP, and is a key enzyme in the biosynthesis of NADP. Catalyzes specifically the phosphorylation on 2'-hydroxyl of the adenosine moiety of NAD to yield NADP. The chain is NAD kinase from Helicobacter pylori (strain J99 / ATCC 700824) (Campylobacter pylori J99).